The following is a 245-amino-acid chain: 8-amino-3,8-dideoxy-manno-octulosonate cytidylyltransferase (245 aa).

The protein belongs to the KdsB family.

The protein resides in the cytoplasm. The catalysed reaction is 8-amino-3,8-dideoxy-alpha-D-manno-octulosonate + CTP = CMP-8-amino-3,8-dideoxy-alpha-D-manno-oct-2-ulosonate + diphosphate. The protein operates within bacterial outer membrane biogenesis; lipopolysaccharide biosynthesis. Its function is as follows. Activates KDO8N (a required 8-carbon sugar) for incorporation into bacterial lipopolysaccharide in the Shewanella genus. The chain is 8-amino-3,8-dideoxy-manno-octulosonate cytidylyltransferase from Shewanella amazonensis (strain ATCC BAA-1098 / SB2B).